The sequence spans 176 residues: Ribosome maturation factor RimP (176 aa).

It belongs to the RimP family.

The protein resides in the cytoplasm. Functionally, required for maturation of 30S ribosomal subunits. This Chlorobium limicola (strain DSM 245 / NBRC 103803 / 6330) protein is Ribosome maturation factor RimP.